Here is a 719-residue protein sequence, read N- to C-terminus: DNA ligase (719 aa).

NAD(+)-binding positions include 42–46 (DAEYD), 91–92 (SL), and Glu-125. Lys-127 functions as the N6-AMP-lysine intermediate in the catalytic mechanism. NAD(+) is bound by residues Arg-148, Glu-184, Lys-300, and Lys-324. Zn(2+) is bound by residues Cys-429, Cys-432, Cys-447, and Cys-453. The BRCT domain maps to 638–719 (TASSPIAEKI…WMRLIKGHNI (82 aa)).

It belongs to the NAD-dependent DNA ligase family. LigA subfamily. Requires Mg(2+) as cofactor. Mn(2+) is required as a cofactor.

The enzyme catalyses NAD(+) + (deoxyribonucleotide)n-3'-hydroxyl + 5'-phospho-(deoxyribonucleotide)m = (deoxyribonucleotide)n+m + AMP + beta-nicotinamide D-nucleotide.. DNA ligase that catalyzes the formation of phosphodiester linkages between 5'-phosphoryl and 3'-hydroxyl groups in double-stranded DNA using NAD as a coenzyme and as the energy source for the reaction. It is essential for DNA replication and repair of damaged DNA. This is DNA ligase from Bartonella tribocorum (strain CIP 105476 / IBS 506).